The primary structure comprises 78 residues: DNA-directed RNA polymerase subunit omega (78 aa).

The protein belongs to the RNA polymerase subunit omega family. In terms of assembly, the RNAP catalytic core consists of 2 alpha, 1 beta, 1 beta' and 1 omega subunit. When a sigma factor is associated with the core the holoenzyme is formed, which can initiate transcription.

The enzyme catalyses RNA(n) + a ribonucleoside 5'-triphosphate = RNA(n+1) + diphosphate. Its function is as follows. Promotes RNA polymerase assembly. Latches the N- and C-terminal regions of the beta' subunit thereby facilitating its interaction with the beta and alpha subunits. This Desulfovibrio desulfuricans (strain ATCC 27774 / DSM 6949 / MB) protein is DNA-directed RNA polymerase subunit omega.